The sequence spans 136 residues: Membrane-bound negative regulator YvrL (136 aa).

The next 4 helical transmembrane spans lie at 18 to 38, 46 to 66, 83 to 103, and 106 to 126; these read LLAA…LFSL, AAHV…FEPF, LFIL…AHTT, and LISD…VFLI.

It is found in the cell membrane. Negatively regulates RNA polymerase sigma factor SigO-dependent transcription. Prevents the expression or secretion of OxdC under nonstress conditions. May act as an anti-sigma factor. The protein is Membrane-bound negative regulator YvrL (yvrL) of Bacillus subtilis (strain 168).